The primary structure comprises 276 residues: 2-dehydro-3-deoxyphosphooctonate aldolase (276 aa).

It belongs to the KdsA family.

The protein resides in the cytoplasm. The catalysed reaction is D-arabinose 5-phosphate + phosphoenolpyruvate + H2O = 3-deoxy-alpha-D-manno-2-octulosonate-8-phosphate + phosphate. It participates in carbohydrate biosynthesis; 3-deoxy-D-manno-octulosonate biosynthesis; 3-deoxy-D-manno-octulosonate from D-ribulose 5-phosphate: step 2/3. It functions in the pathway bacterial outer membrane biogenesis; lipopolysaccharide biosynthesis. The sequence is that of 2-dehydro-3-deoxyphosphooctonate aldolase from Helicobacter pylori (strain P12).